The primary structure comprises 111 residues: Translation initiation factor 1A (111 aa).

Residues 11 to 83 (KKIRLPKEGE…ERADVTWRYT (73 aa)) enclose the S1-like domain.

Belongs to the eIF-1A family.

In terms of biological role, seems to be required for maximal rate of protein biosynthesis. Enhances ribosome dissociation into subunits and stabilizes the binding of the initiator Met-tRNA(I) to 40 S ribosomal subunits. This chain is Translation initiation factor 1A (eIF1A), found in Methanopyrus kandleri (strain AV19 / DSM 6324 / JCM 9639 / NBRC 100938).